Here is a 279-residue protein sequence, read N- to C-terminus: uncharacterized protein (279 aa).

One can recognise a GIY-YIG domain in the interval 2–90 (KIGYIYAIEN…IRDYGSLNTI (89 aa)).

This sequence belongs to the IIV-6 019R family.

This is an uncharacterized protein from Acheta domesticus (House cricket).